Reading from the N-terminus, the 193-residue chain is NADH-quinone oxidoreductase subunit B (193 aa).

4 residues coordinate [4Fe-4S] cluster: cysteine 72, cysteine 73, cysteine 137, and cysteine 167.

Belongs to the complex I 20 kDa subunit family. In terms of assembly, NDH-1 is composed of 14 different subunits. Subunits NuoB, C, D, E, F, and G constitute the peripheral sector of the complex. It depends on [4Fe-4S] cluster as a cofactor.

The protein resides in the cell inner membrane. It carries out the reaction a quinone + NADH + 5 H(+)(in) = a quinol + NAD(+) + 4 H(+)(out). NDH-1 shuttles electrons from NADH, via FMN and iron-sulfur (Fe-S) centers, to quinones in the respiratory chain. The immediate electron acceptor for the enzyme in this species is believed to be ubiquinone. Couples the redox reaction to proton translocation (for every two electrons transferred, four hydrogen ions are translocated across the cytoplasmic membrane), and thus conserves the redox energy in a proton gradient. The protein is NADH-quinone oxidoreductase subunit B of Bradyrhizobium sp. (strain ORS 278).